The sequence spans 336 residues: Cell division protein ZipA (336 aa).

Topologically, residues 1 to 2 (ME) are periplasmic. A helical membrane pass occupies residues 3-23 (LHILFFILAGLLIAVLIGFSL). The Cytoplasmic segment spans residues 24-336 (WSARREKSRI…SRQSYLARVS (313 aa)). Positions 57–76 (SLNPQSYAQTTGQHGETEAD) are disordered. The span at 59-70 (NPQSYAQTTGQH) shows a compositional bias: polar residues.

Belongs to the ZipA family. In terms of assembly, interacts with FtsZ via their C-terminal domains.

It is found in the cell inner membrane. Functionally, essential cell division protein that stabilizes the FtsZ protofilaments by cross-linking them and that serves as a cytoplasmic membrane anchor for the Z ring. Also required for the recruitment to the septal ring of downstream cell division proteins. This is Cell division protein ZipA from Actinobacillus pleuropneumoniae serotype 7 (strain AP76).